Here is a 149-residue protein sequence, read N- to C-terminus: Chromophore lyase CpcS/CpeS homolog (149 aa).

It belongs to the CpcS/CpeS biliprotein lyase family.

It localises to the plastid. The protein localises to the chloroplast. Might function to covalently attach a chromophore to Cys residue(s) of phycobiliproteins. The sequence is that of Chromophore lyase CpcS/CpeS homolog from Porphyra purpurea (Red seaweed).